We begin with the raw amino-acid sequence, 359 residues long: Norspermidine sensor (359 aa).

A signal peptide spans 1 to 33 (MTNFCNEWVSYSQMIKRFLSLMVLNTVCYQASA).

This sequence belongs to the bacterial solute-binding protein PotD/PotF family.

The protein resides in the periplasm. Its function is as follows. Acts as a sensor of norspermidine and enhances biofilm formation. When complexed to norspermidine, could interact with the periplasmic portion of MbaA to regulate its enzymatic activity. This chain is Norspermidine sensor (nspS), found in Vibrio cholerae serotype O1 (strain ATCC 39315 / El Tor Inaba N16961).